Consider the following 460-residue polypeptide: MELRLYDTLTKEKRTFVPLDANNVRMYVCGPTVYDFAHIGNARPVIVFDVLFRLLRHLYGEAHVKYVRNITDVDDKINDRAARDFPGLPLNEAIREVTEQTGKQFHADVDALGALRPSVEPRATEHIGEMREIIERLVAGGFAYVAEDHVLFSPQAMNAANSTLPRYGALSNRSLDEMVAGARVDVAPYKKGSTDFVLWKPSKPGEPSWPSPAGIAAQGRPGWHIECSAMAWKHLGEYFDIHGGGIDLVFPHHENEVAQTCCAFHRERMANYWMHNGFLQVESEKMSKSLGNFITIHELLADWPGEVLRLNMLKTHYRSPIDWTMKSLEESAKTLDDWYRVAADVDPGRPAASVVEPLLDDLNTSLAIAALHGLRNSDVSALAGSLRLLGFLSESAAQWEDRKQKASGVDAGEVERLISERTAARGRKDFKESDRIRDQLAAMGVAIKDSKEGTTWEFSR.

Zn(2+) is bound at residue Cys-29. Residues 31-41 (PTVYDFAHIGN) carry the 'HIGH' region motif. Zn(2+) is bound by residues Cys-227, His-252, and Glu-256. The 'KMSKS' region signature appears at 285–289 (KMSKS). Lys-288 lines the ATP pocket.

It belongs to the class-I aminoacyl-tRNA synthetase family. As to quaternary structure, monomer. Zn(2+) is required as a cofactor.

It is found in the cytoplasm. It carries out the reaction tRNA(Cys) + L-cysteine + ATP = L-cysteinyl-tRNA(Cys) + AMP + diphosphate. In Bradyrhizobium diazoefficiens (strain JCM 10833 / BCRC 13528 / IAM 13628 / NBRC 14792 / USDA 110), this protein is Cysteine--tRNA ligase.